A 333-amino-acid polypeptide reads, in one-letter code: Adenosine deaminase (333 aa).

Residues H12 and H14 each coordinate Zn(2+). Positions 14, 16, and 170 each coordinate substrate. H197 is a binding site for Zn(2+). E200 serves as the catalytic Proton donor. D278 lines the Zn(2+) pocket. Residue D279 participates in substrate binding.

Belongs to the metallo-dependent hydrolases superfamily. Adenosine and AMP deaminases family. Adenosine deaminase subfamily. Zn(2+) serves as cofactor.

The catalysed reaction is adenosine + H2O + H(+) = inosine + NH4(+). The enzyme catalyses 2'-deoxyadenosine + H2O + H(+) = 2'-deoxyinosine + NH4(+). Functionally, catalyzes the hydrolytic deamination of adenosine and 2-deoxyadenosine. This is Adenosine deaminase from Salmonella gallinarum (strain 287/91 / NCTC 13346).